The following is a 232-amino-acid chain: Two-component response regulator ORR4 (232 aa).

Residues 11–147 form the Response regulatory domain; the sequence is HVLAVDDSLI…DMKKLKSHLL (137 aa). At D80 the chain carries 4-aspartylphosphate. Disordered stretches follow at residues 153 to 174 and 202 to 232; these read LPMA…AASA and AAAM…AVET. Positions 209–232 are enriched in polar residues; that stretch reads VISSPDQRTKPRLSSTSSGLAVET.

The protein belongs to the ARR family. Type-A subfamily. Two-component system major event consists of a His-to-Asp phosphorelay between a sensor histidine kinase (HK) and a response regulator (RR). In plants, the His-to-Asp phosphorelay involves an additional intermediate named Histidine-containing phosphotransfer protein (HPt). This multistep phosphorelay consists of a His-Asp-His-Asp sequential transfer of a phosphate group between first a His and an Asp of the HK protein, followed by the transfer to a conserved His of the HPt protein and finally the transfer to an Asp in the receiver domain of the RR protein. As to expression, expressed in mature leaves and flowers, and at low levels in roots and shoots.

Its function is as follows. Functions as a response regulator involved in His-to-Asp phosphorelay signal transduction system. Phosphorylation of the Asp residue in the receiver domain activates the ability of the protein to promote the transcription of target genes. Type-A response regulators seem to act as negative regulators of the cytokinin signaling. This Oryza sativa subsp. indica (Rice) protein is Two-component response regulator ORR4.